Consider the following 174-residue polypeptide: Regenerating islet-derived protein 3-gamma (174 aa).

The first 26 residues, 1 to 26, serve as a signal peptide directing secretion; it reads MLPRITITIMSWMLLSCLMLLSQVQG. The propeptide occupies 27-37; the sequence is EVAKKDAPSSR. Disulfide bonds link C40-C51, C68-C170, and C145-C162. The C-type lectin domain maps to 47–171; the sequence is YGSYCYALFS…CNLELPYVCK (125 aa). The sufficient to activate EXTL3 stretch occupies residues 103–118; that stretch reads WIGLHDPTLGYEPNRG. H107 contributes to the Zn(2+) binding site. The EPN motif lies at 114-116; that stretch reads EPN. Zn(2+) contacts are provided by E121 and H144.

As to quaternary structure, forms a hexameric membrane-permeabilizing oligomeric pore on membrane phospholipids. The hexamer is formed by three dimers related by helical symmetry. Forms filaments, filamentation traps pore complexes and limits damage to host cells. Interacts with EXTL3. Proteolytic processing by trypsin removes an inhibitory N-terminal propeptide and is essential for peptidoglycan binding and antibacterial activity. In terms of tissue distribution, predominantly expressed in the small intestine, including Paneth cells (at protein level). Hardly detectable in the colon (at protein level). Highly expressed in the lung epithelium during methicillin-resistant S.aureus infection and allergic airway inflammation (at protein level). Skin injury increases its epidermal expression. Also expressed in the pancreas. Expressed by nocireceptors.

Its subcellular location is the secreted. The protein localises to the cytoplasm. Lipopolysaccharide inhibits pore-forming activity, explaining why is bactericidal for Gram-positive but not Gram-negative bacteria. Bactericidal C-type lectin which acts exclusively against Gram-positive bacteria and mediates bacterial killing by binding to surface-exposed carbohydrate moieties of peptidoglycan. Restricts bacterial colonization of the intestinal epithelial surface and consequently limits activation of adaptive immune responses by the microbiota. In terms of biological role, acts as a hormone in response to different stimuli like anti-inflammatory signals, such as IL17A, or gut microbiome. Is secreted by different cell types to activate its receptor EXTL3 and induce cell specific signaling pathways. Induced by IL17A in keratinocytes, regulates keratinocyte proliferation and differentiation after skin injury. In parallel, inhibits skin inflammation through the inhibition of inflammatory cytokines such as IL6 and TNF. Induced by IL22 in lung epithelial cells, inhibits cytokine production and regulates allergic airway inflammation. Induced in small intestine by inulin-enriched diet and Lactobacillus gasseri enriched microbiome, plays a role in the improvement of gut barrier function, the regulation of energy balance and glucose levels. Modulates microbiota composition in duodenal contents. Produced by nociceptor in response to endotoxins, prevents endotoxic death by targeting kynurenine pathway in microglia. Functionally, has bacteriostatic activity. Its function is as follows. Has bactericidal activity against L.monocytogenes and methicillin-resistant S.aureus. The chain is Regenerating islet-derived protein 3-gamma from Mus musculus (Mouse).